The primary structure comprises 291 residues: Hydroxysteroid 11-beta-dehydrogenase 1-like protein A (291 aa).

Residues 1-18 (MAGVKLLLLSLCVGYTAY) form the signal peptide. NADP(+) is bound by residues 40-66 (GSSTGIGEQIAYEFARMGAHIMVTARR), 91-92 (DM), and 118-120 (NHI). Ser-170 contributes to the substrate binding site. The active-site Proton acceptor is the Tyr-183. NADP(+) is bound by residues 183 to 187 (YCASK) and 216 to 222 (GYIDTEN).

It belongs to the short-chain dehydrogenases/reductases (SDR) family.

Its subcellular location is the secreted. It carries out the reaction cortisone + NADPH + H(+) = cortisol + NADP(+). Unidirectional NADP(+)-dependent cortisol dehydrogenase (in vitro). The chain is Hydroxysteroid 11-beta-dehydrogenase 1-like protein A (hsd11b1l-a) from Xenopus laevis (African clawed frog).